The primary structure comprises 444 residues: Ribosome biogenesis protein WDR12 homolog (444 aa).

The interval 7 to 87 (VLVKFVTKLP…ESTLEVEYVP (81 aa)) is ubiquitin-like (UBL) domain. The segment at 91 to 123 (PPQQKNSTPHDDWVSSVDGSRCAPASSSGGSPS) is disordered. WD repeat units follow at residues 105–148 (SSVD…VASV), 150–191 (AHAG…EEDA), and 203–242 (GHED…RWAA). The disordered stretch occupies residues 243-264 (GTAEASKKKRKTGTANGSAAAG). WD repeat units lie at residues 272–310 (GHLH…AADT), 312–352 (NGSK…GSDA), 360–400 (AHGG…PLGM), and 403–444 (HHTD…YIVS).

This sequence belongs to the WD repeat WDR12/YTM1 family.

Its subcellular location is the nucleus. It localises to the nucleolus. The protein resides in the nucleoplasm. Required for maturation of ribosomal RNAs and formation of the large ribosomal subunit. In Chlamydomonas reinhardtii (Chlamydomonas smithii), this protein is Ribosome biogenesis protein WDR12 homolog.